The sequence spans 191 residues: MATLRFTLLLLVFVVGIFFSFSSVSHVRATSEINLRIEPFSSPFATDLAKLQTQIGYKFNNINLLRRAMTHASFSQENNKALSIFGTHIIETAVSLQFLAKDIDISSKALGRLISEVSNVESSCALDGDRLGLGKIIRVSTKTDASNSAILCTGFRAIFGAIAIDAGTVDEAIKVFWKVHGARAGRLVSML.

Residues 1 to 29 (MATLRFTLLLLVFVVGIFFSFSSVSHVRA) form the signal peptide. Residues 48-167 (LAKLQTQIGY…IFGAIAIDAG (120 aa)) enclose the RNase III domain.

Functionally, required for karyogamy during female gametophyte development, when the two polar nuclei fuse to form the diploid central cell nucleus. The protein is Protein NUCLEAR FUSION DEFECTIVE 2 of Arabidopsis thaliana (Mouse-ear cress).